Here is a 275-residue protein sequence, read N- to C-terminus: Hemin import ATP-binding protein HmuV (275 aa).

One can recognise an ABC transporter domain in the interval 2 to 242 (LKAAGIGVRL…EWIETGFGLQ (241 aa)). 34-41 (GPNGAGKS) provides a ligand contact to ATP.

This sequence belongs to the ABC transporter superfamily. Heme (hemin) importer (TC 3.A.1.14.5) family. In terms of assembly, the complex is composed of two ATP-binding proteins (HmuV), two transmembrane proteins (HmuU) and a solute-binding protein (HmuT).

It localises to the cell inner membrane. In terms of biological role, part of the ABC transporter complex HmuTUV involved in hemin import. Responsible for energy coupling to the transport system. The sequence is that of Hemin import ATP-binding protein HmuV from Gloeobacter violaceus (strain ATCC 29082 / PCC 7421).